Here is a 386-residue protein sequence, read N- to C-terminus: Tubulin beta-1 chain (386 aa).

Positions 7, 76, 80, 81, 82, 142, and 164 each coordinate GTP. Glu7 is a binding site for Mg(2+). A disordered region spans residues 363–386 (YQDATADEEGEYEDEEEDLQAEDM). The span at 367–386 (TADEEGEYEDEEEDLQAEDM) shows a compositional bias: acidic residues.

The protein belongs to the tubulin family. Dimer of alpha and beta chains. A typical microtubule is a hollow water-filled tube with an outer diameter of 25 nm and an inner diameter of 15 nM. Alpha-beta heterodimers associate head-to-tail to form protofilaments running lengthwise along the microtubule wall with the beta-tubulin subunit facing the microtubule plus end conferring a structural polarity. Microtubules usually have 13 protofilaments but different protofilament numbers can be found in some organisms and specialized cells. Requires Mg(2+) as cofactor.

It is found in the cytoplasm. Its subcellular location is the cytoskeleton. Functionally, tubulin is the major constituent of microtubules, a cylinder consisting of laterally associated linear protofilaments composed of alpha- and beta-tubulin heterodimers. Microtubules grow by the addition of GTP-tubulin dimers to the microtubule end, where a stabilizing cap forms. Below the cap, tubulin dimers are in GDP-bound state, owing to GTPase activity of alpha-tubulin. The sequence is that of Tubulin beta-1 chain (TUBB1) from Avena sativa (Oat).